The chain runs to 204 residues: UPF0301 protein Mflv_0850 (204 aa).

The protein belongs to the UPF0301 (AlgH) family.

The protein is UPF0301 protein Mflv_0850 of Mycolicibacterium gilvum (strain PYR-GCK) (Mycobacterium gilvum (strain PYR-GCK)).